The chain runs to 725 residues: Antigen peptide transporter 1 (725 aa).

Residues 1–8 (MAAHAWPT) lie on the Cytoplasmic side of the membrane. The chain crosses the membrane as a helical span at residues 9 to 29 (AALLLLLVDWLLLRPVLPGIF). Residues 30–38 (SLLVPEVPL) are Lumenal-facing. Residues 39–60 (LRVWAVGLSRWAILGLGVRGVL) traverse the membrane as a helical segment. Topologically, residues 61-67 (GVTAGAR) are cytoplasmic. The chain crosses the membrane as a helical span at residues 68 to 88 (GWLAALQPLVAALGLALPGLA). At 89–110 (SFRKLSAWGALREGDNAGLLHW) the chain is on the lumenal side. The chain crosses the membrane as a helical span at residues 111-131 (NSRLDAFVLSYVAALPAAALW). At 132 to 163 (HKLGGFWAPSGHKGAGDMLCRMLGFLDSKKGR) the chain is on the cytoplasmic side. The chain crosses the membrane as a helical span at residues 164 to 184 (LHLVLVLLILSCLGEMAIPFF). Positions 164 to 447 (LHLVLVLLIL…LLSIYPSMQK (284 aa)) constitute an ABC transmembrane type-1 domain. Topologically, residues 185–204 (TGRITDWILQDKTAPSFARN) are lumenal. The chain crosses the membrane as a helical span at residues 205 to 225 (MWLMCILTIASTVLEFAGDGI). At 226 to 275 (YNITMGHMHSRVHGEVFRAVLHQETGFFLKNPTGSITSRVTEDTSNVCES) the chain is on the cytoplasmic side. Residues 276–296 (ISDKLNLFLWYLGRGLCLLAF) traverse the membrane as a helical segment. At 297–305 (MIWGSFYLT) the chain is on the lumenal side. A helical membrane pass occupies residues 306 to 326 (VVTLLSLPLLFLLPRRLGKVY). Residues 327 to 395 (QSLAVKVQES…VTEVWTMSVS (69 aa)) lie on the Cytoplasmic side of the membrane. The segment at 352–397 (PTVRSFANEEGEAQKFRQKLEEMKPLNKKEALAYVTEVWTMSVSGM) is part of the peptide-binding site. The chain crosses the membrane as a helical span at residues 396–416 (GMLLKVGILYLGGQLVVRGAV). Over 417–420 (SSGN) the chain is Lumenal. Residues 421-441 (LVSFVLYQLQFTRAVEVLLSI) traverse the membrane as a helical segment. The segment at 430-464 (QFTRAVEVLLSIYPSMQKSVGASEKIFEYLDRTPC) is part of the peptide-binding site. Topologically, residues 442–725 (YPSMQKSVGA…MVEALAAPSD (284 aa)) are cytoplasmic. In terms of domain architecture, ABC transporter spans 480-719 (VKFQDVSFAY…GGCYRSMVEA (240 aa)). ATP-binding positions include 515–523 (GPNGSGKST), 618–624 (NQLSGGQ), and Gln-678. Ser-522 provides a ligand contact to Mg(2+).

The protein belongs to the ABC transporter superfamily. ABCB family. MHC peptide exporter (TC 3.A.1.209) subfamily. As to quaternary structure, heterodimer of TAP1 and TAP2 (TAP1-TAP2). A component of the peptide loading complex (PLC), interacts via TAPBP with MHCI heterodimer; this interaction mediates peptide-MHCI assembly. Interacts with PSMB5 and PSMB8. It depends on Mg(2+) as a cofactor.

It localises to the endoplasmic reticulum membrane. It carries out the reaction a peptide antigen(in) + ATP + H2O = a peptide antigen(out) + ADP + phosphate + H(+). Functionally, ABC transporter associated with antigen processing. In complex with TAP2 mediates unidirectional translocation of peptide antigens from cytosol to endoplasmic reticulum (ER) for loading onto MHC class I (MHCI) molecules. Uses the chemical energy of ATP to export peptides against the concentration gradient. During the transport cycle alternates between 'inward-facing' state with peptide binding site facing the cytosol to 'outward-facing' state with peptide binding site facing the ER lumen. Peptide antigen binding to ATP-loaded TAP1-TAP2 induces a switch to hydrolysis-competent 'outward-facing' conformation ready for peptide loading onto nascent MHCI molecules. Subsequently ATP hydrolysis resets the transporter to the 'inward facing' state for a new cycle. As a component of the peptide loading complex (PLC), acts as a molecular scaffold essential for peptide-MHCI assembly and antigen presentation. This Rattus norvegicus (Rat) protein is Antigen peptide transporter 1 (Tap1).